A 310-amino-acid chain; its full sequence is MKGLVIKNTGSWYQVKTDDGQLVECKIKGNFRLKGIRSTNPVAVGDRVQIILNQEGTAFISEIEDRKNYIIRRSSNLSKQSHILAANLDQCMLVVTVNYPETSTTFIDRFLASAEAYRVPVKILFNKVDAYDEDELHYLDSLITLYTQIGYPCFKISALTGEGVDAIREELKGRVTLFSGHSGVGKSTLINALVPGLEVKTAEISAYHNKGMHTTTFSEMFPVPGDGYIIDTPGIKGFGTFDMEEEEIGHYFPEIFKTSANCKYGNCTHRQEPGCAVRKAVEEHYISESRYTSYLSMLEDKEEGKYRAAY.

One can recognise a CP-type G domain in the interval Leu77–Phe238. GTP is bound by residues Asn126–Asp129 and Gly180–Thr188. Residues Cys262, Cys267, His269, and Cys275 each coordinate Zn(2+).

The protein belongs to the TRAFAC class YlqF/YawG GTPase family. RsgA subfamily. In terms of assembly, monomer. Associates with 30S ribosomal subunit, binds 16S rRNA. The cofactor is Zn(2+).

The protein localises to the cytoplasm. Its function is as follows. One of several proteins that assist in the late maturation steps of the functional core of the 30S ribosomal subunit. Helps release RbfA from mature subunits. May play a role in the assembly of ribosomal proteins into the subunit. Circularly permuted GTPase that catalyzes slow GTP hydrolysis, GTPase activity is stimulated by the 30S ribosomal subunit. This Bacteroides fragilis (strain ATCC 25285 / DSM 2151 / CCUG 4856 / JCM 11019 / LMG 10263 / NCTC 9343 / Onslow / VPI 2553 / EN-2) protein is Small ribosomal subunit biogenesis GTPase RsgA.